The sequence spans 1316 residues: DNA-directed RNA polymerase subunit beta' (1316 aa).

4 residues coordinate Zn(2+): Cys60, Cys62, Cys75, and Cys78. Positions 535, 537, and 539 each coordinate Mg(2+). Residues Cys891, Cys968, Cys975, and Cys978 each coordinate Zn(2+).

Belongs to the RNA polymerase beta' chain family. The RNAP catalytic core consists of 2 alpha, 1 beta, 1 beta' and 1 omega subunit. When a sigma factor is associated with the core the holoenzyme is formed, which can initiate transcription. Mg(2+) serves as cofactor. Requires Zn(2+) as cofactor.

It catalyses the reaction RNA(n) + a ribonucleoside 5'-triphosphate = RNA(n+1) + diphosphate. Its function is as follows. DNA-dependent RNA polymerase catalyzes the transcription of DNA into RNA using the four ribonucleoside triphosphates as substrates. The sequence is that of DNA-directed RNA polymerase subunit beta' from Mycobacterium tuberculosis (strain ATCC 25177 / H37Ra).